Reading from the N-terminus, the 180-residue chain is Stathmin-3 (180 aa).

2 S-palmitoyl cysteine lipidation sites follow: C22 and C24. An SLD domain is found at 38 to 180 (GDMEVKQLDK…NKEQREEMSG (143 aa)). 7 positions are modified to phosphoserine: S50, S60, S65, S68, S72, S73, and S81. A disordered region spans residues 58 to 81 (LKSPSDLSPESPVLSSPPKRKDAS). The segment covering 60 to 74 (SPSDLSPESPVLSSP) has biased composition (low complexity). A coiled-coil region spans residues 75-179 (PKRKDASLEE…RNKEQREEMS (105 aa)).

It belongs to the stathmin family. Interacts with STAT3. Interacts with CLU (secreted form); this interaction may act as an important modulator during neuronal differentiation. N-terminal palmitoylation promotes specific anchoring to the cytosolic leaflet of Golgi membranes and subsequent vesicular trafficking along dendrites and axons. Neuronal Stathmins are substrates for palmitoyltransferases ZDHHC3, ZDHHC7 and ZDHHC15. Neuron specific.

It localises to the golgi apparatus. The protein localises to the cell projection. It is found in the growth cone. The protein resides in the axon. Its subcellular location is the cytoplasm. It localises to the cytosol. In terms of biological role, exhibits microtubule-destabilizing activity, which is antagonized by STAT3. The protein is Stathmin-3 (Stmn3) of Rattus norvegicus (Rat).